The primary structure comprises 395 residues: Ribonuclease D (395 aa).

The 3'-5' exonuclease domain maps to 14 to 181 (LITKSEDLAA…VYETLRDRLE (168 aa)). An HRDC domain is found at 219–300 (NRRYLGLLRA…AEARGLPDAD (82 aa)).

Belongs to the RNase D family. A divalent metal cation is required as a cofactor.

The protein localises to the cytoplasm. The catalysed reaction is Exonucleolytic cleavage that removes extra residues from the 3'-terminus of tRNA to produce 5'-mononucleotides.. Its function is as follows. Exonuclease involved in the 3' processing of various precursor tRNAs. Initiates hydrolysis at the 3'-terminus of an RNA molecule and releases 5'-mononucleotides. The chain is Ribonuclease D from Granulibacter bethesdensis (strain ATCC BAA-1260 / CGDNIH1).